Here is a 243-residue protein sequence, read N- to C-terminus: ATP synthase subunit a (243 aa).

Transmembrane regions (helical) follow at residues 29–49 (NASL…YIGL), 54–74 (ILPN…VSTI), 89–109 (VFTI…PLGF), 114–134 (HIAV…AIGF), 144–164 (ILLP…IELF), 182–202 (IAGH…NIFL), and 208–228 (AFII…AYIF).

It belongs to the ATPase A chain family. As to quaternary structure, F-type ATPases have 2 components, CF(1) - the catalytic core - and CF(0) - the membrane proton channel. CF(1) has five subunits: alpha(3), beta(3), gamma(1), delta(1), epsilon(1). CF(0) has three main subunits: a(1), b(2) and c(9-12). The alpha and beta chains form an alternating ring which encloses part of the gamma chain. CF(1) is attached to CF(0) by a central stalk formed by the gamma and epsilon chains, while a peripheral stalk is formed by the delta and b chains.

It localises to the cell inner membrane. Key component of the proton channel; it plays a direct role in the translocation of protons across the membrane. The protein is ATP synthase subunit a of Ehrlichia chaffeensis (strain ATCC CRL-10679 / Arkansas).